The chain runs to 398 residues: MAKLTVKDLDLKGKKVLVRVDFNVPLKNGVITNDNRISAALPTIKYIIEHGGRAILFSHLGRVKEEADKEGKSLAPVAKNLAEKLGQEVIFPGSTRGAELEAAIDALEDGQVLLVENTRFEDIDGKKESKNDPELGKYWASLGEGIFVNDAFGTAHRTHASNVGISANVEKAVAGFLLENEIAYIKEAVEAPERPFVAILGGSKVSDKIGVIENLLEKADKVLIGGGMTYTFYKAQGIEIGNSLCEEDKLDVAKSLLEKSNGKLILPVDSKEANAFADYTEVKVTEGEAVDAGFLGLDIGPKSIAKFDEALTGAKTVVWNGPMGVFENPDFQEGTIGVMDAIVKQPGVKSIIGGGDSAAAAINLGRADKFSWISTGGGASMELLEGKELPGLAALTEK.

Residues 21-23, Arg36, 59-62, Arg119, and Arg157 contribute to the substrate site; these read DFN and HLGR. ATP is bound by residues Lys208, Gly296, Glu327, and 354–357; that span reads GGDS.

Belongs to the phosphoglycerate kinase family. As to quaternary structure, monomer.

The protein localises to the cytoplasm. It carries out the reaction (2R)-3-phosphoglycerate + ATP = (2R)-3-phospho-glyceroyl phosphate + ADP. It participates in carbohydrate degradation; glycolysis; pyruvate from D-glyceraldehyde 3-phosphate: step 2/5. This is Phosphoglycerate kinase from Streptococcus equi subsp. zooepidemicus (strain MGCS10565).